We begin with the raw amino-acid sequence, 143 residues long: General odorant-binding protein 28a (143 aa).

Positions 1 to 21 (MQSTPIILVAIVLLGAALVRA) are cleaved as a signal peptide. Intrachain disulfides connect Cys-38–Cys-69, Cys-65–Cys-123, and Cys-113–Cys-132.

Expressed in antenna, mostly on the medial and posterior surface of the third antennal segment.

The protein localises to the secreted. This Drosophila melanogaster (Fruit fly) protein is General odorant-binding protein 28a (Obp28a).